A 211-amino-acid polypeptide reads, in one-letter code: Late expression factor 7 (211 aa).

Involved in late/very late gene activation. This is Late expression factor 7 (LEF-7) from Orgyia pseudotsugata multicapsid polyhedrosis virus (OpMNPV).